A 263-amino-acid polypeptide reads, in one-letter code: Endonuclease 8 (263 aa).

The Schiff-base intermediate with DNA role is filled by P2. E3 acts as the Proton donor in catalysis. Catalysis depends on K53, which acts as the Proton donor; for beta-elimination activity. DNA is bound by residues Q70, R125, and N169. The segment at 229–263 (KVFHRDGEVCERCGGIIEKTTLSSRPFYWCPHCQK) adopts an FPG-type zinc-finger fold. The active-site Proton donor; for delta-elimination activity is R253.

This sequence belongs to the FPG family. The cofactor is Zn(2+).

It carries out the reaction 2'-deoxyribonucleotide-(2'-deoxyribose 5'-phosphate)-2'-deoxyribonucleotide-DNA = a 3'-end 2'-deoxyribonucleotide-(2,3-dehydro-2,3-deoxyribose 5'-phosphate)-DNA + a 5'-end 5'-phospho-2'-deoxyribonucleoside-DNA + H(+). Functionally, involved in base excision repair of DNA damaged by oxidation or by mutagenic agents. Acts as a DNA glycosylase that recognizes and removes damaged bases. Has a preference for oxidized pyrimidines, such as thymine glycol, 5,6-dihydrouracil and 5,6-dihydrothymine. Has AP (apurinic/apyrimidinic) lyase activity and introduces nicks in the DNA strand. Cleaves the DNA backbone by beta-delta elimination to generate a single-strand break at the site of the removed base with both 3'- and 5'-phosphates. This Salmonella newport (strain SL254) protein is Endonuclease 8.